The chain runs to 173 residues: 3-hydroxydecanoyl-[acyl-carrier-protein] dehydratase (173 aa).

His-71 is a catalytic residue.

It belongs to the thioester dehydratase family. FabA subfamily. Homodimer.

It is found in the cytoplasm. The catalysed reaction is a (3R)-hydroxyacyl-[ACP] = a (2E)-enoyl-[ACP] + H2O. The enzyme catalyses (3R)-hydroxydecanoyl-[ACP] = (2E)-decenoyl-[ACP] + H2O. It carries out the reaction (2E)-decenoyl-[ACP] = (3Z)-decenoyl-[ACP]. Its pathway is lipid metabolism; fatty acid biosynthesis. In terms of biological role, necessary for the introduction of cis unsaturation into fatty acids. Catalyzes the dehydration of (3R)-3-hydroxydecanoyl-ACP to E-(2)-decenoyl-ACP and then its isomerization to Z-(3)-decenoyl-ACP. Can catalyze the dehydratase reaction for beta-hydroxyacyl-ACPs with saturated chain lengths up to 16:0, being most active on intermediate chain length. This Baumannia cicadellinicola subsp. Homalodisca coagulata protein is 3-hydroxydecanoyl-[acyl-carrier-protein] dehydratase.